The following is a 46-amino-acid chain: Protein YpdJ (46 aa).

Functionally, may be involved in H(2) production during fermentative growth. In Escherichia coli (strain K12), this protein is Protein YpdJ (ypdJ).